The primary structure comprises 1058 residues: UPF0507 protein YALI0E18612g (1058 aa).

The VPS9 domain occupies 252 to 394 (TNEDGPLDQA…IGENREQLEA (143 aa)).

The protein belongs to the UPF0507 family.

This is UPF0507 protein YALI0E18612g from Yarrowia lipolytica (strain CLIB 122 / E 150) (Yeast).